Consider the following 167-residue polypeptide: uncharacterized protein (167 aa).

The protein localises to the virion. This is an uncharacterized protein from Acanthamoeba polyphaga (Amoeba).